A 366-amino-acid chain; its full sequence is 5-hydroxytryptamine receptor 1F (366 aa).

Residues 1-24 are Extracellular-facing; sequence MDFLNSSDQNLTSEELLNRMPSKI. N5 and N10 each carry an N-linked (GlcNAc...) asparagine glycan. The helical transmembrane segment at 25–49 threads the bilayer; it reads LVSLTLSGLALMTTTINSLVIAAII. Over 50-59 the chain is Cytoplasmic; sequence VTRKLHHPAN. The chain crosses the membrane as a helical span at residues 60-81; it reads YLICSLAVTDFLVAVLVMPFSI. The Extracellular portion of the chain corresponds to 82–96; sequence VYIVRESWIMGQVVC. C96 and C172 form a disulfide bridge. The chain crosses the membrane as a helical span at residues 97–119; sequence DIWLSVDITCCTCSILHLSAIAL. The serotonin site is built by D103 and C107. Positions 120-122 match the DRY motif; important for ligand-induced conformation changes motif; it reads DRY. At 120–139 the chain is on the cytoplasmic side; that stretch reads DRYRAITDAVEYARKRTPKH. A helical membrane pass occupies residues 140 to 159; sequence AGIMITIVWIISVFISMPPL. Topologically, residues 160–178 are extracellular; it reads FWRHQGTSRDDECIIKHDH. A helical membrane pass occupies residues 179-202; the sequence is IVSTIYSTFGAFYIPLALILILYY. At 203–291 the chain is on the cytoplasmic side; the sequence is KIYRAAKTLY…KISGTRERKA (89 aa). The chain crosses the membrane as a helical span at residues 292–315; the sequence is ATTLGLILGAFVICWLPFFVKELV. Topologically, residues 316 to 327 are extracellular; sequence VNVCDKCKISEE. Residues 328–350 traverse the membrane as a helical segment; it reads MSNFLAWLGYLNSLINPLIYTIF. The short motif at 343–347 is the NPxxY motif; important for ligand-induced conformation changes and signaling element; that stretch reads NPLIY. Topologically, residues 351-366 are cytoplasmic; sequence NEDFKKAFQKLVRCRC.

It belongs to the G-protein coupled receptor 1 family.

It localises to the cell membrane. In terms of biological role, G-protein coupled receptor for 5-hydroxytryptamine (serotonin). Also functions as a receptor for various alkaloids and psychoactive substances. Receptor for lasmiditan, a drug for the treatment of acute migraine. Ligand binding causes a conformation change that triggers signaling via guanine nucleotide-binding proteins (G proteins) and modulates the activity of downstream effectors, such as adenylate cyclase. HTR1F is coupled to G(i)/G(o) G alpha proteins and mediates inhibitory neurotransmission by inhibiting adenylate cyclase activity. The polypeptide is 5-hydroxytryptamine receptor 1F (Homo sapiens (Human)).